The primary structure comprises 154 residues: SsrA-binding protein (154 aa).

Belongs to the SmpB family.

It is found in the cytoplasm. Its function is as follows. Required for rescue of stalled ribosomes mediated by trans-translation. Binds to transfer-messenger RNA (tmRNA), required for stable association of tmRNA with ribosomes. tmRNA and SmpB together mimic tRNA shape, replacing the anticodon stem-loop with SmpB. tmRNA is encoded by the ssrA gene; the 2 termini fold to resemble tRNA(Ala) and it encodes a 'tag peptide', a short internal open reading frame. During trans-translation Ala-aminoacylated tmRNA acts like a tRNA, entering the A-site of stalled ribosomes, displacing the stalled mRNA. The ribosome then switches to translate the ORF on the tmRNA; the nascent peptide is terminated with the 'tag peptide' encoded by the tmRNA and targeted for degradation. The ribosome is freed to recommence translation, which seems to be the essential function of trans-translation. The protein is SsrA-binding protein of Staphylococcus aureus (strain Mu3 / ATCC 700698).